Reading from the N-terminus, the 62-residue chain is Omega-lycotoxin-Am1e (62 aa).

A propeptide spanning residues 1 to 15 is cleaved from the precursor; the sequence is EDEVEETLPVAEEGR. 4 cysteine pairs are disulfide-bonded: Cys-19/Cys-34, Cys-26/Cys-39, Cys-33/Cys-59, and Cys-41/Cys-57.

It belongs to the neurotoxin omega-lctx family. As to expression, expressed by the venom gland.

The protein resides in the secreted. Modulates Cav2.1/CACNA1A voltage-gated calcium channels (P/Q-type currents) in rat cerebellar Purkinje cells and hippocampal CA1-CA3 neurons. At saturating concentrations (&gt;10 nM) decelerates activation kinetics and slightly increases peak amplitude without affecting deactivation kinetics. In vivo, does not cause death when intravenously injected into mice. In rat models, through its activity on Cav2.1/CACNA1A, has an ameliorative effect on memory defects provoked by hyperstimulation of N-methyl-D-aspartate receptors (NMDARs) in the hippocampus. This Alopecosa marikovskyi (Wolf spider) protein is Omega-lycotoxin-Am1e.